The following is a 485-amino-acid chain: Transcription factor E2FA (485 aa).

Positions 1-11 are enriched in low complexity; it reads MSGVVRSSPGS. 2 disordered regions span residues 1-69 and 114-159; these read MSGV…SNNN and SGFT…SPIT. Residues 12-26 are compositionally biased toward pro residues; sequence SQPPPPPPHHPPSSP. Over residues 114–125 the composition is skewed to polar residues; the sequence is SGFTNIPSSPCQ. Positions 129–141 are enriched in basic residues; that stretch reads KGGRVNIKSKAKG. Polar residues predominate over residues 142 to 159; that stretch reads NKSTPQTPISTNAGSPIT. A DNA-binding region spans residues 167 to 232; it reads RYDSSLGLLT…PFKNRILWKG (66 aa). Residues 245-286 are a coiled coil; the sequence is SVLQLQAEIENLALEEQALDNQIRQTEERLRDLSENEKNQKW. Residues 249 to 277 are leucine-zipper; it reads LQAEIENLALEEQALDNQIRQTEERLRDL. Residues 435 to 450 form a retinoblastoma protein binding region; it reads DYWLLSNAEISMTDIW.

It belongs to the E2F/DP family. In terms of assembly, heterodimer with DP proteins. Interacts (via dimerization domain) preferentially with DPA, but also with DPB. Interacts with maize retinoblastoma-related protein RBR1. No interaction with E2FD. As to expression, highly expressed in the shoot apical meristem, emerging leaf primordia, and vascular tissues of young leaf primordia. Expressed in flowers, in epidermis and cortex of hypocotyls, and at lower levels in leaves.

It localises to the cytoplasm. Its subcellular location is the nucleus. Transcription activator that binds DNA cooperatively with DP proteins through the E2 recognition site, 5'-TTTC[CG]CGC-3' found in the promoter region of a number of genes whose products are involved in cell cycle regulation or in DNA replication. The binding of retinoblastoma-related proteins represses transactivation. Regulates gene expression both positively and negatively. Activates the expression of E2FB. Involved in the control of cell-cycle progression from G1 to S phase. Stimulates cell proliferation and delays differentiation. The polypeptide is Transcription factor E2FA (E2FA) (Arabidopsis thaliana (Mouse-ear cress)).